The sequence spans 242 residues: MANVSMRDMLKAGVHFGHQTRFWNPKMKPYIFGARNKIHIINLEKTVPMFNDALSYMQHVASNKGKILFVGTKRAAAEAVKEAAINCGQYYVNHRWLGGMLTNWKTVRQSIKRLKDLETMSQDGTFEKLTKKEALVNTREMEKLEKGLGGIKNMGGLPDVLFVIDADHEHISIKEANNLGIPVVSVVDTNSNPDGVDYIVPGNDDAIRAVQLYLNTAAEAVKEARTAQVEAKDSDDFVEATE.

Belongs to the universal ribosomal protein uS2 family.

The chain is Small ribosomal subunit protein uS2 from Idiomarina loihiensis (strain ATCC BAA-735 / DSM 15497 / L2-TR).